The sequence spans 335 residues: Dihydroorotate dehydrogenase (quinone) (335 aa).

FMN contacts are provided by residues alanine 58–lysine 62 and threonine 82. Lysine 62 contributes to the substrate binding site. Asparagine 107–phenylalanine 111 is a substrate binding site. Residues asparagine 135 and asparagine 168 each contribute to the FMN site. A substrate-binding site is contributed by asparagine 168. The active-site Nucleophile is serine 171. Residue asparagine 173 participates in substrate binding. FMN contacts are provided by lysine 213 and glycine 241. Residue asparagine 242–threonine 243 coordinates substrate. FMN contacts are provided by residues glycine 264, glycine 293, and tyrosine 314 to serine 315.

The protein belongs to the dihydroorotate dehydrogenase family. Type 2 subfamily. In terms of assembly, monomer. FMN is required as a cofactor.

The protein resides in the cell membrane. It catalyses the reaction (S)-dihydroorotate + a quinone = orotate + a quinol. Its pathway is pyrimidine metabolism; UMP biosynthesis via de novo pathway; orotate from (S)-dihydroorotate (quinone route): step 1/1. Functionally, catalyzes the conversion of dihydroorotate to orotate with quinone as electron acceptor. This is Dihydroorotate dehydrogenase (quinone) from Actinobacillus pleuropneumoniae serotype 5b (strain L20).